Consider the following 158-residue polypeptide: Small ribosomal subunit protein uS15 (158 aa).

The segment covering 1 to 18 has biased composition (basic residues); the sequence is MARMHARKRGKSGSKRPP. The interval 1-21 is disordered; that stretch reads MARMHARKRGKSGSKRPPRTA.

The protein belongs to the universal ribosomal protein uS15 family. Part of the 30S ribosomal subunit.

This Pyrococcus furiosus (strain ATCC 43587 / DSM 3638 / JCM 8422 / Vc1) protein is Small ribosomal subunit protein uS15.